A 152-amino-acid polypeptide reads, in one-letter code: MSQLCPCGSAVEYSLCCHPYVSGEKVAPDPEHLMRSRYCAFVMQDADYLIKTWHPSCGAAALRAELMTGFAHTEWLGLTVFEHCWQDADNIGFVSFVARFTEGGKTGAIIERSRFLKENGQWYYIDGTRPQFGRNDPCPCGSGKKFKKCCGQ.

Belongs to the UPF0225 family.

The chain is UPF0225 protein YchJ from Shigella flexneri serotype 5b (strain 8401).